The sequence spans 59 residues: Antitoxin Rv0909 (59 aa).

In terms of biological role, antitoxin component of a type II toxin-antitoxin (TA) system. Upon expression in M.smegmatis neutralizes the effect of cognate toxin Rv0910. The protein is Antitoxin Rv0909 of Mycobacterium tuberculosis (strain ATCC 25618 / H37Rv).